An 80-amino-acid chain; its full sequence is Pre-core protein X (80 aa).

Positions 2 to 32 (ALTCRLRFPVPGFRGRMHRRRGMAGHGLTGG) are excised as a propeptide. The disordered stretch occupies residues 18-45 (MHRRRGMAGHGLTGGMRRAHHRRRRASH). Over residues 34–45 (RRAHHRRRRASH) the composition is skewed to basic residues. A propeptide spanning residues 52 to 80 (ILPLLIPLIAAAIGAVPGIASVALQAQRH) is cleaved from the precursor.

It belongs to the adenoviridae core protein X family. Interacts with the core-capsid bridging protein; this interaction bridges the virus core to the capsid. Post-translationally, cleaved by the viral protease during virion maturation to form the mature protein.

The protein localises to the host nucleus. It localises to the host nucleolus. It is found in the virion. Interacts with the viral DNA and aids in tightly condensing it within the capsid. Cleavage of pre-core protein X may serve to partially relax this structure within the mature virion prior to its entry into the nucleus. The sequence is that of Pre-core protein X from Human adenovirus C serotype 2 (HAdV-2).